Reading from the N-terminus, the 260-residue chain is Factor V activator RVV-V gamma (260 aa).

The N-terminal stretch at 1 to 18 (MVLIKVLANLLVLQLSYA) is a signal peptide. A propeptide spanning residues 19–24 (QKSSEL) is cleaved from the precursor. Positions 25-251 (VVGGDECNIN…YNNWIQSIIA (227 aa)) constitute a Peptidase S1 domain. Disulfide bonds link Cys31/Cys165, Cys52/Cys68, Cys100/Cys258, Cys144/Cys212, Cys176/Cys191, and Cys202/Cys227. Residues His67 and Asp112 each act as charge relay system in the active site. Ser206 functions as the Charge relay system in the catalytic mechanism. Asn253 carries an N-linked (GlcNAc...) asparagine glycan.

Belongs to the peptidase S1 family. Snake venom subfamily. As to quaternary structure, monomer. Expressed by the venom gland.

Its subcellular location is the secreted. It catalyses the reaction Fully activates human clotting factor V by a single cleavage at the 1545-Trp-Tyr-Leu-Arg-|-Ser-Asn-Asn-Gly-1552 bond. Cattle, but not rabbit, factor V is cleaved, and no other proteins of the clotting system are attacked. Esterase activity is observed on Bz-Arg-OEt and Tos-Arg-OMe, and amidase activity on Phe-pipecolyl-Arg-NHPhNO2.. Its function is as follows. Venom serine protease that selectively activates factor V (F5) in a calcium-independent manner. It cleaves the Arg(1545)-Ser(1546) linkage in the human factor V molecule. Induces the coagulation of mammalian plasma. The polypeptide is Factor V activator RVV-V gamma (Daboia siamensis (Eastern Russel's viper)).